The primary structure comprises 490 residues: 2,3-bisphosphoglycerate-independent phosphoglycerate mutase (490 aa).

Mn(2+) contacts are provided by aspartate 9 and serine 59. Serine 59 (phosphoserine intermediate) is an active-site residue. Residues histidine 116, 145 to 146, arginine 175, arginine 181, 246 to 249, and lysine 319 each bind substrate; these read RD and RSDR. Positions 385, 389, 426, 427, and 444 each coordinate Mn(2+).

It belongs to the BPG-independent phosphoglycerate mutase family. Monomer. Mn(2+) serves as cofactor.

It catalyses the reaction (2R)-2-phosphoglycerate = (2R)-3-phosphoglycerate. It participates in carbohydrate degradation; glycolysis; pyruvate from D-glyceraldehyde 3-phosphate: step 3/5. Catalyzes the interconversion of 2-phosphoglycerate and 3-phosphoglycerate. The protein is 2,3-bisphosphoglycerate-independent phosphoglycerate mutase of Helicobacter hepaticus (strain ATCC 51449 / 3B1).